The chain runs to 349 residues: Carbamoyl phosphate synthase small chain (349 aa).

A CPSase region spans residues 1–170; it reads MKAKLILENG…KYEISGEGKK (170 aa). L-glutamine is bound by residues Ser-45, Gly-218, and Gly-220. The region spanning 170–349 is the Glutamine amidotransferase type-1 domain; the sequence is KVAIIDFGIK…IFDEFMKYAL (180 aa). Residue Cys-245 is the Nucleophile of the active site. L-glutamine is bound by residues Leu-246, Gln-249, Asn-287, Gly-289, and Tyr-290. Active-site residues include His-327 and Glu-329.

It belongs to the CarA family. In terms of assembly, composed of two chains; the small (or glutamine) chain promotes the hydrolysis of glutamine to ammonia, which is used by the large (or ammonia) chain to synthesize carbamoyl phosphate. Tetramer of heterodimers (alpha,beta)4.

It carries out the reaction hydrogencarbonate + L-glutamine + 2 ATP + H2O = carbamoyl phosphate + L-glutamate + 2 ADP + phosphate + 2 H(+). The enzyme catalyses L-glutamine + H2O = L-glutamate + NH4(+). Its pathway is amino-acid biosynthesis; L-arginine biosynthesis; carbamoyl phosphate from bicarbonate: step 1/1. The protein operates within pyrimidine metabolism; UMP biosynthesis via de novo pathway; (S)-dihydroorotate from bicarbonate: step 1/3. Functionally, small subunit of the glutamine-dependent carbamoyl phosphate synthetase (CPSase). CPSase catalyzes the formation of carbamoyl phosphate from the ammonia moiety of glutamine, carbonate, and phosphate donated by ATP, constituting the first step of 2 biosynthetic pathways, one leading to arginine and/or urea and the other to pyrimidine nucleotides. The small subunit (glutamine amidotransferase) binds and cleaves glutamine to supply the large subunit with the substrate ammonia. This Clostridium perfringens (strain 13 / Type A) protein is Carbamoyl phosphate synthase small chain.